Consider the following 266-residue polypeptide: 5'-nucleotidase SurE (266 aa).

4 residues coordinate a divalent metal cation: Asp8, Asp9, Ser42, and Asn98.

Belongs to the SurE nucleotidase family. A divalent metal cation serves as cofactor.

The protein resides in the cytoplasm. It catalyses the reaction a ribonucleoside 5'-phosphate + H2O = a ribonucleoside + phosphate. Its function is as follows. Nucleotidase that shows phosphatase activity on nucleoside 5'-monophosphates. This is 5'-nucleotidase SurE from Methanocaldococcus jannaschii (strain ATCC 43067 / DSM 2661 / JAL-1 / JCM 10045 / NBRC 100440) (Methanococcus jannaschii).